The following is a 185-amino-acid chain: Peptide deformylase (185 aa).

2 residues coordinate Fe cation: cysteine 112 and histidine 155. Residue glutamate 156 is part of the active site. Histidine 159 serves as a coordination point for Fe cation.

This sequence belongs to the polypeptide deformylase family. Fe(2+) is required as a cofactor.

It carries out the reaction N-terminal N-formyl-L-methionyl-[peptide] + H2O = N-terminal L-methionyl-[peptide] + formate. In terms of biological role, removes the formyl group from the N-terminal Met of newly synthesized proteins. Requires at least a dipeptide for an efficient rate of reaction. N-terminal L-methionine is a prerequisite for activity but the enzyme has broad specificity at other positions. The protein is Peptide deformylase of Latilactobacillus sakei subsp. sakei (strain 23K) (Lactobacillus sakei subsp. sakei).